The following is a 750-amino-acid chain: Photosystem I P700 chlorophyll a apoprotein A1 (750 aa).

8 helical membrane-spanning segments follow: residues 70–93 (VFSA…FHGA), 156–179 (LYCT…FHYH), 195–219 (LNHH…HVSL), 291–309 (IAHH…GHMY), 346–369 (WHAQ…HHMY), 385–411 (LSLF…IFMV), 433–455 (AIIS…LYIH), and 531–549 (FLVH…LILL). [4Fe-4S] cluster contacts are provided by Cys-573 and Cys-582. Transmembrane regions (helical) follow at residues 589–610 (HVFL…HFSW) and 664–686 (LSAY…MFLF). Residue His-675 coordinates chlorophyll a'. Residues Met-683 and Tyr-691 each coordinate chlorophyll a. Trp-692 contributes to the phylloquinone binding site. Residues 724–744 (AVGVTHYLLGGIATTWAFFLA) form a helical membrane-spanning segment.

Belongs to the PsaA/PsaB family. In terms of assembly, the PsaA/B heterodimer binds the P700 chlorophyll special pair and subsequent electron acceptors. PSI consists of a core antenna complex that captures photons, and an electron transfer chain that converts photonic excitation into a charge separation. The eukaryotic PSI reaction center is composed of at least 11 subunits. It depends on P700 is a chlorophyll a/chlorophyll a' dimer, A0 is one or more chlorophyll a, A1 is one or both phylloquinones and FX is a shared 4Fe-4S iron-sulfur center. as a cofactor.

The protein resides in the plastid. The protein localises to the chloroplast thylakoid membrane. It catalyses the reaction reduced [plastocyanin] + hnu + oxidized [2Fe-2S]-[ferredoxin] = oxidized [plastocyanin] + reduced [2Fe-2S]-[ferredoxin]. In terms of biological role, psaA and PsaB bind P700, the primary electron donor of photosystem I (PSI), as well as the electron acceptors A0, A1 and FX. PSI is a plastocyanin-ferredoxin oxidoreductase, converting photonic excitation into a charge separation, which transfers an electron from the donor P700 chlorophyll pair to the spectroscopically characterized acceptors A0, A1, FX, FA and FB in turn. Oxidized P700 is reduced on the lumenal side of the thylakoid membrane by plastocyanin. The chain is Photosystem I P700 chlorophyll a apoprotein A1 from Cucumis sativus (Cucumber).